The primary structure comprises 58 residues: Putative antitoxin VapB16 (58 aa).

Putative antitoxin component of a possible type II toxin-antitoxin (TA) system. The cognate toxin is VapC16. In Mycobacterium tuberculosis (strain ATCC 25618 / H37Rv), this protein is Putative antitoxin VapB16 (vapB16).